We begin with the raw amino-acid sequence, 498 residues long: L-xylulose/3-keto-L-gulonate kinase (498 aa).

This sequence belongs to the FGGY kinase family. In terms of assembly, homodimer.

It catalyses the reaction L-xylulose + ATP = L-xylulose 5-phosphate + ADP + H(+). The enzyme catalyses 3-dehydro-L-gulonate + ATP = 3-dehydro-L-gulonate 6-phosphate + ADP + H(+). Functionally, catalyzes the phosphorylation of L-xylulose and 3-keto-L-gulonate. Is involved in L-lyxose utilization via xylulose, and may also be involved in the utilization of 2,3-diketo-L-gulonate. In Escherichia coli (strain K12), this protein is L-xylulose/3-keto-L-gulonate kinase (lyx).